We begin with the raw amino-acid sequence, 266 residues long: 3-oxoadipate enol-lactonase 1 (266 aa).

The AB hydrolase-1 domain occupies 28–250 (PAIVFSNSLG…DASHLSNIEQ (223 aa)).

The catalysed reaction is (4,5-dihydro-5-oxofuran-2-yl)-acetate + H2O = 3-oxoadipate + H(+). The protein operates within aromatic compound metabolism; beta-ketoadipate pathway; 3-oxoadipate from 5-oxo-4,5-dihydro-2-furylacetate: step 1/1. The protein is 3-oxoadipate enol-lactonase 1 (pcaD) of Acinetobacter baylyi (strain ATCC 33305 / BD413 / ADP1).